The sequence spans 164 residues: MLADKKIVKVEVSKEHLKTLNEASTLLISCVDFRLIDETDKLMKQLGLEDDFDKVSLPGASLALVNEKYTHWGKTIEDTIEILQDLHNIKQIIFLDHRECGAYKKLIAEERLSTKEKETEAHTEILNKARKIIKEKFPQLKVYTFLMGLDGVIEQIYERHPADC.

This is an uncharacterized protein from Rickettsia bellii (strain RML369-C).